The chain runs to 256 residues: MLLRTASSFSLLKANADHILPLPNSSSSGIIRYSQSLGKNLVPCATKDTNNRPLTGVVFEPFEEVKKELDLVPTVPQASLARQKYTDDCEATINEQINVEYNVSYVYHAMFAYFDRDNVALKGLAKFFKESSEEEREHAEKLMEYQNKRGGKVKLQSIVMPLSEFDHEEKGDALYAMELALSLEKLTNEKLLNLHSVASKNNDVQLADFIESEFLGEQVEAIKKISEYVAQLRRVGKGHGVWHFDQMLLHEEGVAA.

Residues 1–49 (MLLRTASSFSLLKANADHILPLPNSSSSGIIRYSQSLGKNLVPCATKDT) constitute a chloroplast transit peptide. The tract at residues 50–82 (NNRPLTGVVFEPFEEVKKELDLVPTVPQASLAR) is extension peptide (EP). In terms of domain architecture, Ferritin-like diiron spans 83-236 (QKYTDDCEAT…EYVAQLRRVG (154 aa)). Fe cation is bound by residues E100, E135, H138, E184, and Q218.

The protein belongs to the ferritin family. As to quaternary structure, oligomer of 24 subunits. There are two types of subunits: L (light) chain and H (heavy) chain. The major chain can be light or heavy, depending on the species and tissue type. The functional molecule forms a roughly spherical shell with a diameter of 12 nm and contains a central cavity into which the insoluble mineral iron core is deposited.

The protein resides in the plastid. It localises to the chloroplast. It carries out the reaction 4 Fe(2+) + O2 + 4 H(+) = 4 Fe(3+) + 2 H2O. Functionally, stores iron in a soluble, non-toxic, readily available form. Important for iron homeostasis. Has ferroxidase activity. Iron is taken up in the ferrous form and deposited as ferric hydroxides after oxidation. The chain is Ferritin-3, chloroplastic from Glycine max (Soybean).